The sequence spans 121 residues: Large ribosomal subunit protein bL12 (121 aa).

The protein belongs to the bacterial ribosomal protein bL12 family. Homodimer. Part of the ribosomal stalk of the 50S ribosomal subunit. Forms a multimeric L10(L12)X complex, where L10 forms an elongated spine to which 2 to 4 L12 dimers bind in a sequential fashion. Binds GTP-bound translation factors.

Functionally, forms part of the ribosomal stalk which helps the ribosome interact with GTP-bound translation factors. Is thus essential for accurate translation. The protein is Large ribosomal subunit protein bL12 of Klebsiella pneumoniae (strain 342).